We begin with the raw amino-acid sequence, 66 residues long: Large ribosomal subunit protein bL33c (66 aa).

The protein belongs to the bacterial ribosomal protein bL33 family.

It localises to the plastid. Its subcellular location is the chloroplast. This chain is Large ribosomal subunit protein bL33c, found in Barbarea verna (Land cress).